The sequence spans 323 residues: tRNA N6-adenosine threonylcarbamoyltransferase (323 aa).

Residues H110 and H114 each coordinate Fe cation. Residues 131 to 135 (VASGG), D164, G177, and N264 contribute to the substrate site. D288 serves as a coordination point for Fe cation.

Belongs to the KAE1 / TsaD family. The cofactor is Fe(2+).

The protein resides in the cytoplasm. The enzyme catalyses L-threonylcarbamoyladenylate + adenosine(37) in tRNA = N(6)-L-threonylcarbamoyladenosine(37) in tRNA + AMP + H(+). Its function is as follows. Required for the formation of a threonylcarbamoyl group on adenosine at position 37 (t(6)A37) in tRNAs that read codons beginning with adenine. Is involved in the transfer of the threonylcarbamoyl moiety of threonylcarbamoyl-AMP (TC-AMP) to the N6 group of A37, together with TsaE and TsaB. TsaD likely plays a direct catalytic role in this reaction. The chain is tRNA N6-adenosine threonylcarbamoyltransferase from Thermus thermophilus (strain ATCC BAA-163 / DSM 7039 / HB27).